Consider the following 66-residue polypeptide: Large ribosomal subunit protein bL35 (66 aa).

This sequence belongs to the bacterial ribosomal protein bL35 family.

In Jannaschia sp. (strain CCS1), this protein is Large ribosomal subunit protein bL35.